A 1484-amino-acid chain; its full sequence is MCPEEGGAAGLGELRSWWEVPAIAHFCSLFRTAFRLPDFEIEELEAALHRDDVEFISDLIACLLQGCYQRRDITPQTFHSYLEDIINYRWELEEGKPNPLREASFQDLPLRTRVEILHRLCDYRLDADDVFDLLKGLDADSLRVEPLGEDNSGALYWYFYGTRMYKEDPVQGKSNGELSLSRESEGQKNVSSIPGKTGKRRGRPPKRKKLQEEILLSEKQEENSLASEPQTRHGSQGPGQGTWWLLCQTEEEWRQVTESFRERTSLRERQLYKLLSEDFLPEICNMIAQKGKRPQRTKAELHPRWMSDHLSIKPVKQEETPVLTRIEKQKRKEEEEERQILLAVQKKEQEQMLKEERKRELEEKVKAVEGMCSVRVVWRGACLSTSRPVDRAKRRKLREERAWLLAQGKELPPELSHLDPNSPMREEKKTKDLFELDDDFTAMYKVLDVVKAHKDSWPFLEPVDESYAPNYYQIIKAPMDISSMEKKLNGGLYCTKEEFVNDMKTMFRNCRKYNGESSEYTKMSDNLERCFHRAMMKHFPGEDGDTDEEFWIREDEKREKRRSRAGRSGGSHVWTRSRDPEGSSRKQQPMENGGKSLPPTRRAPSSGDDQSSSSTQPPREVGTSNGRGFSHPLHCGGTPSQAPFLNQMRPAVPGTFGPLRGSDPATLYGSSGVPEPHPGEPVQQRQPFTMQPPVGINSLRGPRLGTPEEKQMCGGLTHLSNMGPHPGSLQLGQISGPSQDGSMYAPAQFQPGFIPPRHGGAPARPPDFPESSEIPPSHMYRSYKYLNRVHSAVWNGNHGATNQGPLGPDEKPHLGPGPSHQPRTLGHVMDSRVMRPPVPPNQWTEQSGFLPHGVPSSGYMRPPCKSAGHRLQPPPVPAPSSLFGAPAQALRGVQGGDSMMDSPEMIAMQQLSSRVCPPGVPYHPHQPAHPRLPGPFPQVAHPMSVTVSAPKPALGNPGRAPENSEAQEPENDQAEPLPGLEEKPPGVGTSEGVYLTQLPHPTPPLQTDCTRQSSPQERETVGPELKSSSSESADNCKAMKGKNPWPSDSSYPGPAAQGCVRDLSTVADRGALSENGVIGEASPCGSEGKGLGSSGSEKLLCPRGRTLQETMPCTGQNAATPPSTDPGLTGGTVSQFPPLYMPGLEYPNSAAHYHISPGLQGVGPVMGGKSPASHPQHFPPRGFQSNHPHSGGFPRYRPPQGMRYSYHPPPQPSYHHYQRTPYYACPQSFSDWQRPLHPQGSPSGPPASQPPPPRSLFSDKNAMASLQGCETLNAALTSPTRMDAVAAKVPNDGQNPGPEEEKLDESMERPESPKEFLDLDNHNAATKRQSSLSASEYLYGTPPPLSSGMGFGSSAFPPHSVMLQTGPPYTPQRPASHFQPRAYSSPVAALPPHHPGATQPNGLSQEGPIYRCQEEGLGHFQAVMMEQIGTRSGIRGPFQEMYRPSGMQMHPVQSQASFPKTPTAATSQEEVPPHKPPTLPLDQS.

Residues 170 to 241 (VQGKSNGELS…RHGSQGPGQG (72 aa)) form a disordered region. Positions 197–209 (TGKRRGRPPKRKK) are enriched in basic residues. Positions 210 to 222 (LQEEILLSEKQEE) are enriched in basic and acidic residues. Positions 223–234 (NSLASEPQTRHG) are enriched in polar residues. Serine 422 is modified (phosphoserine). The Bromo domain occupies 434–538 (FELDDDFTAM…RCFHRAMMKH (105 aa)). A Phosphothreonine modification is found at threonine 546. Disordered regions lie at residues 556–704 (EKRE…GPRL), 796–825 (GNHG…PRTL), 919–1053 (GVPY…SYPG), 1165–1259 (VMGG…LFSD), 1287–1320 (AKVP…LDLD), and 1442–1484 (YRPS…LDQS). At serine 571 the chain carries Phosphoserine. Over residues 605–614 (SSGDDQSSSS) the composition is skewed to low complexity. Serine 1014 carries the phosphoserine modification. Residues arginine 1197 and arginine 1203 each carry the asymmetric dimethylarginine modification. Residues 1243 to 1254 (SGPPASQPPPPR) show a composition bias toward pro residues. The span at 1304–1320 (DESMERPESPKEFLDLD) shows a compositional bias: basic and acidic residues. A Phosphoserine modification is found at serine 1312. Polar residues predominate over residues 1451–1469 (PVQSQASFPKTPTAATSQE). The span at 1474-1484 (HKPPTLPLDQS) shows a compositional bias: pro residues.

In terms of assembly, component of the CERF-1 ISWI chromatin remodeling complex (also called the CECR2-containing remodeling factor (CERF) complex) at least composed of CECR2 and SMARCA1. Component of the CERF-5 ISWI chromatin remodeling complex at least composed of SMARCA5/SNF2H and CECR2. LUZP1 is detected as part of the CERF-1 and CERF-5 complexes in embryonic stem (ES) cells where it is involved in complex stabilization but is not detected in the complexes in the testis. Interacts with CCAR2; CCAR2 may form part of the CERF-1 and/or CEF-5 ISWI chromatin remodeling complexes in ES cells. Interacts with acetylated lysine residues on histone H2A and H3 (in vitro). Interacts with LRPPRC. Highly expressed in skeletal muscle, thymus, placenta and lung. Expressed at lower level in brain, heart, colon, spleen, kidney.

The protein resides in the nucleus. Regulatory subunit of the ATP-dependent CERF-1 and CERF-5 ISWI chromatin remodeling complexes, which form ordered nucleosome arrays on chromatin and facilitate access to DNA during DNA-templated processes such as DNA replication, transcription, and repair. The complexes do not have the ability to slide mononucleosomes to the center of a DNA template. The CERF-1 ISWI chromatin remodeling complex has a lower ATP hydrolysis rate than the CERF-5 ISWI chromatin remodeling complex. Plays a role in various processes during development: required during embryogenesis for neural tube closure and inner ear development. In adults, required for spermatogenesis, via the formation of ISWI-type chromatin complexes. In histone-modifying complexes, CECR2 recognizes and binds acylated histones: binds histones that are acetylated and/or butyrylated. May also be involved through its interaction with LRPPRC in the integration of cytoskeletal network with vesicular trafficking, nucleocytosolic shuttling, transcription, chromosome remodeling and cytokinesis. The sequence is that of Chromatin remodeling regulator CECR2 (CECR2) from Homo sapiens (Human).